The following is a 502-amino-acid chain: Histidine--tRNA ligase (502 aa).

It belongs to the class-II aminoacyl-tRNA synthetase family. As to quaternary structure, homodimer.

Its subcellular location is the cytoplasm. The catalysed reaction is tRNA(His) + L-histidine + ATP = L-histidyl-tRNA(His) + AMP + diphosphate + H(+). This Brucella suis biovar 1 (strain 1330) protein is Histidine--tRNA ligase (hisS).